The following is a 1959-amino-acid chain: Zinc finger protein hangover (1959 aa).

The ZAD domain maps to 79–155; that stretch reads NCCRLCIAPQ…FSSQAKQRQW (77 aa). Cysteine 81, cysteine 84, cysteine 128, and cysteine 131 together coordinate Zn(2+). The tract at residues 178–208 is disordered; it reads GFFDQHLHQQQQHHQHLENELEAEKEKATPT. Over residues 192–205 the composition is skewed to basic and acidic residues; that stretch reads QHLENELEAEKEKA. Phosphoserine is present on serine 228. Threonine 246 carries the post-translational modification Phosphothreonine. The C2H2-type 1 zinc finger occupies 318-341; sequence ASCRACSLQFSTRANARRHERNLH. The C2H2-type 2; degenerate zinc finger occupies 447 to 469; the sequence is MTCRCCNKYFSTYKNFMAHVRKK. The C2H2-type 3 zinc-finger motif lies at 581-604; it reads YECKLCPKGFRTKHEFRTHVYDKH. The interval 674–762 is disordered; sequence AVSDNASTTG…ANRDASAPKS (89 aa). Residues 677 to 693 show a composition bias toward polar residues; it reads DNASTTGSGMARSNSME. Serine 680 is modified (phosphoserine). Composition is skewed to low complexity over residues 716–727 and 741–759; these read SSSAAPPLTSTP and TSASAAAAAQSSANRDASA. 2 C2H2-type zinc fingers span residues 770-793 and 801-824; these read QVCPICGQQYNNYNNVLRHMESKH and YKCVRCGLGYPRISYLREHMINVH. Phosphoserine occurs at positions 832, 894, 895, 898, and 899. Residues 908 to 930 form a C2H2-type 6 zinc finger; sequence KECPICNAVFSNNIGLSNHMRSH. Residues 960–991 are disordered; that stretch reads TDSELGVGGTMSESAPATPANVPPAMANQTPQ. 5 C2H2-type zinc fingers span residues 1011 to 1034, 1042 to 1065, 1078 to 1101, 1154 to 1176, and 1184 to 1207; these read MRCRICQRRFSSKKSYRYHMLTDH, IKCKLCNAEFAYEKGLKVHLFKVH, FECDVCSIVYSSESELQQHKRSVH, YQCKYCPSNFNTNKKLAIHINSH, and YSCKDCGNVYSGRKSLWVHRYKKH. Residues 1233-1253 are compositionally biased toward polar residues; sequence TPTCNRKPITSTGAHQQQDGQ. The tract at residues 1233–1301 is disordered; sequence TPTCNRKPIT…GNGTTVGVAS (69 aa). Residues 1255-1267 show a composition bias toward basic residues; sequence HSHHTAKRTIFRH. The segment covering 1271-1283 has biased composition (acidic residues); sequence DDDDEEDDDEQQQ. C2H2-type zinc fingers lie at residues 1318–1340 and 1375–1397; these read VACTICGARFTDQEHFSKHIQKH and YACDLCAKTFPQVIALKVHRKWH. The segment covering 1445 to 1467 has biased composition (low complexity); the sequence is QQSLNNSCNSSMNHNNNSSSNRS. The interval 1445–1471 is disordered; it reads QQSLNNSCNSSMNHNNNSSSNRSKSMK. 2 consecutive C2H2-type zinc fingers follow at residues 1476 to 1499 and 1552 to 1574; these read LKCEYCASTFISNNNLRRHMYELH and WGCDLCGEYLSRKEKLMNHINNH. The tract at residues 1627-1865 is disordered; it reads AAGATTTDKL…STGERRKKAV (239 aa). A compositionally biased stretch (acidic residues) spans 1639–1695; it reads PDEEDSDDLDEDSSGDDDDSSGTGDDDDDDDSDDDEDGEGEDEDEEGDGGEGEDEEG. Low complexity predominate over residues 1697 to 1715; sequence QPPAQLLPQQQHKTDLNLN. Composition is skewed to acidic residues over residues 1716–1758 and 1782–1829; these read QDDD…EEPE and SDDE…EDEP. Low complexity predominate over residues 1833-1851; that stretch reads STASFSESESSTTTTSNSH. Residues 1873–1895 form a C2H2-type 16 zinc finger; that stretch reads FTCDLCQLCFDSQELLQSHIKSH. Residues 1933–1959 form a disordered region; the sequence is PDSKSAVLANNNNSKTSSKTVAAGATN. The span at 1942–1952 shows a compositional bias: low complexity; that stretch reads NNNNSKTSSKT.

Expressed ubiquitously in the nervous system, in neurons not glia.

Its subcellular location is the nucleus. Its function is as follows. Required for normal development of ethanol tolerance. Relies on two distinct molecular pathways: a cellular stress pathway defined by hang, and a parallel pathway requiring octopamine. The polypeptide is Zinc finger protein hangover (hang) (Drosophila melanogaster (Fruit fly)).